The primary structure comprises 237 residues: MVISSLSNSQPLNAPVSSSPITQELANNLILTTLNDLYNWARLSSLWPLLYGTSCCFIEFACLIGSRFDFDRFGLVPRSSPRQADLIITAGTVTMKMAPSLVRLYEQMPDPKYVIAMGACTITGGMFSTDSYSTVRGVDKLIPVDVYLPGCPPKPEAIIDAVIKLRKKVAQEQTAERRGIEQIHRYFTLSHRLQPVSPILTGQYLQAETRQAPPRELATGLDTLVPRSLEANYIERF.

Residues C55, C56, C120, and C151 each coordinate [4Fe-4S] cluster.

Belongs to the complex I 20 kDa subunit family. As to quaternary structure, NDH is composed of at least 16 different subunits, 5 of which are encoded in the nucleus. [4Fe-4S] cluster is required as a cofactor.

The protein localises to the plastid. Its subcellular location is the chloroplast thylakoid membrane. The catalysed reaction is a plastoquinone + NADH + (n+1) H(+)(in) = a plastoquinol + NAD(+) + n H(+)(out). It catalyses the reaction a plastoquinone + NADPH + (n+1) H(+)(in) = a plastoquinol + NADP(+) + n H(+)(out). Its function is as follows. NDH shuttles electrons from NAD(P)H:plastoquinone, via FMN and iron-sulfur (Fe-S) centers, to quinones in the photosynthetic chain and possibly in a chloroplast respiratory chain. The immediate electron acceptor for the enzyme in this species is believed to be plastoquinone. Couples the redox reaction to proton translocation, and thus conserves the redox energy in a proton gradient. This is NAD(P)H-quinone oxidoreductase subunit K, chloroplastic from Nephroselmis olivacea (Green alga).